A 498-amino-acid chain; its full sequence is Probable malate:quinone oxidoreductase (498 aa).

This sequence belongs to the MQO family. The cofactor is FAD.

The catalysed reaction is (S)-malate + a quinone = a quinol + oxaloacetate. Its pathway is carbohydrate metabolism; tricarboxylic acid cycle; oxaloacetate from (S)-malate (quinone route): step 1/1. This Prochlorococcus marinus (strain MIT 9301) protein is Probable malate:quinone oxidoreductase.